We begin with the raw amino-acid sequence, 248 residues long: ATP synthase subunit a, chloroplastic (248 aa).

Helical transmembrane passes span Gln38 to Val58, Val96 to Leu116, Ile135 to Thr155, Leu200 to Leu220, and Gly221 to Gly241.

The protein belongs to the ATPase A chain family. In terms of assembly, F-type ATPases have 2 components, CF(1) - the catalytic core - and CF(0) - the membrane proton channel. CF(1) has five subunits: alpha(3), beta(3), gamma(1), delta(1), epsilon(1). CF(0) has four main subunits: a, b, b' and c.

It is found in the plastid. It localises to the chloroplast thylakoid membrane. Its function is as follows. Key component of the proton channel; it plays a direct role in the translocation of protons across the membrane. The sequence is that of ATP synthase subunit a, chloroplastic from Nymphaea alba (White water-lily).